The sequence spans 272 residues: Cyclase-like protein 2 (272 aa).

An N-terminal signal peptide occupies residues 1 to 24; sequence MAVPPLFFLLTLLSLPSLLISAGA.

The protein belongs to the Cyclase 1 superfamily.

The protein resides in the secreted. Its subcellular location is the extracellular space. The protein localises to the extracellular matrix. In terms of biological role, may function redundantly with CYCLASE1 for normal plant growth, development and viability. This Arabidopsis thaliana (Mouse-ear cress) protein is Cyclase-like protein 2.